A 358-amino-acid chain; its full sequence is Magnesium-protoporphyrin IX monomethyl ester [oxidative] cyclase 1 (358 aa).

Belongs to the AcsF family. The cofactor is Fe cation.

The catalysed reaction is Mg-protoporphyrin IX 13-monomethyl ester + 3 NADPH + 3 O2 + 2 H(+) = 3,8-divinyl protochlorophyllide a + 3 NADP(+) + 5 H2O. It functions in the pathway porphyrin-containing compound metabolism; chlorophyll biosynthesis (light-independent). Functionally, catalyzes the formation of the isocyclic ring in chlorophyll biosynthesis. Mediates the cyclase reaction, which results in the formation of divinylprotochlorophyllide (Pchlide) characteristic of all chlorophylls from magnesium-protoporphyrin IX 13-monomethyl ester (MgPMME). The chain is Magnesium-protoporphyrin IX monomethyl ester [oxidative] cyclase 1 from Synechocystis sp. (strain ATCC 27184 / PCC 6803 / Kazusa).